The chain runs to 152 residues: UPF0266 membrane protein YobD (152 aa).

The next 3 membrane-spanning stretches (helical) occupy residues 6-26, 45-65, and 67-87; these read LVLILFIAALLAYALYDQFIM, VDSVIFVGLVAILIYNNVTSH, and AQMTTWLLSALALMGFYIFWI.

It belongs to the UPF0266 family.

It is found in the cell inner membrane. The protein is UPF0266 membrane protein YobD of Salmonella choleraesuis (strain SC-B67).